Here is a 230-residue protein sequence, read N- to C-terminus: MWAWALLPICLTIWATAGIWIVYGMSVSNGSVNLTDGFPFISLCGTYPPQSCVFGQVLNVGAMLGVWISVIRFQQIRDYGCHSVLNSVSLAMGLLCALGTSIVGNFQQSNQLETHLAGAFLAFVIGNIYFWMQTVLTYMVKPKHGGCYIGPIRFCLSVACTALIVLMAVFLKLNMKSISAICEWIVAMILFLLYGLFSVDFWHLDGHYFHVKKRTAIPNEVEVSTVTLNI.

Residue M1 is a topological domain, cytoplasmic. Residues 2–22 (WAWALLPICLTIWATAGIWIV) traverse the membrane as a helical segment. At 23–50 (YGMSVSNGSVNLTDGFPFISLCGTYPPQ) the chain is on the extracellular side. N29 and N33 each carry an N-linked (GlcNAc...) asparagine glycan. The helical transmembrane segment at 51–71 (SCVFGQVLNVGAMLGVWISVI) threads the bilayer. The Cytoplasmic segment spans residues 72–83 (RFQQIRDYGCHS). Residues 84–104 (VLNSVSLAMGLLCALGTSIVG) traverse the membrane as a helical segment. The Extracellular portion of the chain corresponds to 105 to 115 (NFQQSNQLETH). Residues 116-136 (LAGAFLAFVIGNIYFWMQTVL) traverse the membrane as a helical segment. Over 137 to 150 (TYMVKPKHGGCYIG) the chain is Cytoplasmic. Residues 151 to 171 (PIRFCLSVACTALIVLMAVFL) form a helical membrane-spanning segment. The Extracellular segment spans residues 172-183 (KLNMKSISAICE). Residues 184-204 (WIVAMILFLLYGLFSVDFWHL) form a helical membrane-spanning segment. Residues 205-230 (DGHYFHVKKRTAIPNEVEVSTVTLNI) lie on the Cytoplasmic side of the membrane.

The protein belongs to the DRAM/TMEM150 family.

It localises to the cell membrane. The protein localises to the endosome membrane. It is found in the cytoplasmic vesicle. The protein resides in the autophagosome membrane. Modulator of macroautophagy that causes accumulation of autophagosomes under basal conditions and enhances autophagic flux. Represses cell death and promotes long-term clonogenic survival of cells grown in the absence of glucose in a macroautophagy-independent manner. May have some role in extracellular matrix engulfment or growth factor receptor recycling, both of which can modulate cell survival. The sequence is that of Modulator of macroautophagy TMEM150B from Xenopus tropicalis (Western clawed frog).